The chain runs to 144 residues: Large ribosomal subunit protein uL16 (144 aa).

It belongs to the universal ribosomal protein uL16 family. Part of the 50S ribosomal subunit.

Its function is as follows. Binds 23S rRNA and is also seen to make contacts with the A and possibly P site tRNAs. The chain is Large ribosomal subunit protein uL16 from Bacillus subtilis (strain 168).